Consider the following 43-residue polypeptide: Protein PsbN (43 aa).

The helical transmembrane segment at 7-27 (LSISIGVMVVAITGFSIYTAF) threads the bilayer.

This sequence belongs to the PsbN family.

The protein resides in the cellular thylakoid membrane. Functionally, may play a role in photosystem I and II biogenesis. The sequence is that of Protein PsbN from Trichodesmium erythraeum (strain IMS101).